Here is a 511-residue protein sequence, read N- to C-terminus: 2,3-bisphosphoglycerate-independent phosphoglycerate mutase (511 aa).

The Mn(2+) site is built by D14 and S64. The active-site Phosphoserine intermediate is the S64. Residues H125, 155-156 (RD), R187, R193, 259-262 (RADR), and K333 contribute to the substrate site. Mn(2+) is bound by residues D400, H404, D441, H442, and H460.

The protein belongs to the BPG-independent phosphoglycerate mutase family. In terms of assembly, monomer. Mn(2+) is required as a cofactor.

It catalyses the reaction (2R)-2-phosphoglycerate = (2R)-3-phosphoglycerate. The protein operates within carbohydrate degradation; glycolysis; pyruvate from D-glyceraldehyde 3-phosphate: step 3/5. Catalyzes the interconversion of 2-phosphoglycerate and 3-phosphoglycerate. The sequence is that of 2,3-bisphosphoglycerate-independent phosphoglycerate mutase from Pseudomonas entomophila (strain L48).